The chain runs to 220 residues: Protein LURP-one-related 12 (220 aa).

Belongs to the LOR family.

Functionally, might be related to the phospholipid scramblase and tubby-like superfamily of membrane tethered transcription factors. The polypeptide is Protein LURP-one-related 12 (Arabidopsis thaliana (Mouse-ear cress)).